The following is a 410-amino-acid chain: Cytochrome P450(BM-1) (410 aa).

A heme-binding site is contributed by C356.

The protein belongs to the cytochrome P450 family. The cofactor is heme.

The protein localises to the cytoplasm. Functionally, cytochromes P450 are a group of heme-thiolate monooxygenases. They oxidize a variety of structurally unrelated compounds, including steroids, fatty acids, and xenobiotics. In Priestia megaterium (strain ATCC 14581 / DSM 32 / CCUG 1817 / JCM 2506 / NBRC 15308 / NCIMB 9376 / NCTC 10342 / NRRL B-14308 / VKM B-512 / Ford 19) (Bacillus megaterium), this protein is Cytochrome P450(BM-1) (cyp106).